The chain runs to 1335 residues: Regulatory-associated protein of mTOR (1335 aa).

Residues serine 44 and serine 122 each carry the phosphoserine modification. Serine 696 carries the phosphoserine; by MAPK8 modification. Threonine 700 carries O-linked (GlcNAc) threonine glycosylation. Threonine 706 is subject to Phosphothreonine; by MAPK8. Phosphoserine; by RPS6KA1 occurs at positions 719 and 721. Serine 722 is subject to Phosphoserine; by AMPK and RPS6KA1. Serine 738 is subject to Phosphoserine. The interval 749 to 771 (GSSVAFSPGNLSTSSSASSTLGS) is disordered. Residues 755–771 (SPGNLSTSSSASSTLGS) are compositionally biased toward low complexity. Phosphoserine is present on serine 791. Residue serine 792 is modified to Phosphoserine; by AMPK. Residues serine 836 and serine 855 each carry the phosphoserine modification. Residues 853 to 866 (TSSLTQSAPASPTN) are compositionally biased toward polar residues. The tract at residues 853–942 (TSSLTQSAPA…GPDQTTDDAD (90 aa)) is disordered. A Phosphoserine; by MTOR modification is found at serine 859. Serine 863 bears the Phosphoserine; by MAPK8, MTOR and NLK mark. Threonine 865 bears the Phosphothreonine mark. A Phosphoserine modification is found at serine 877. The segment covering 877-887 (SPPASSTSSCS) has biased composition (low complexity). Polar residues predominate over residues 888–898 (LTNDVAKQTVS). Glycyl lysine isopeptide (Lys-Gly) (interchain with G-Cter in ubiquitin) cross-links involve residues lysine 932 and lysine 948. At serine 982 the chain carries Phosphoserine. WD repeat units lie at residues 1020–1061 (NRNP…DYFH), 1065–1106 (PRYT…EKNP), 1121–1160 (TTRG…KVQD), 1164–1203 (GADS…SECR), 1209–1249 (EHTA…SVNV), 1251–1291 (QIVK…NNIK), and 1299–1335 (QRVG…KRVR). The residue at position 1097 (lysine 1097) is an N6-acetyllysine.

This sequence belongs to the WD repeat RAPTOR family. Part of the mechanistic target of rapamycin complex 1 (mTORC1) which contains MTOR, MLST8 and RPTOR. mTORC1 associates with AKT1S1/PRAS40, which inhibits its activity. mTORC1 associates with DEPTOR, which regulates its activity. mTORC1 binds to and is inhibited by FKBP12-rapamycin. Forms a complex with MTOR under both leucine-rich and -poor conditions. Interacts with (via TOS motifs) EIF4EBP1 and RPS6KB1; interaction is independent of its association with MTOR. Binds preferentially to poorly or non-phosphorylated forms of EIF4EBP1, and this binding is critical to the ability of MTOR to catalyze phosphorylation. Interacts with ULK1 in a nutrient-dependent manner; the interaction is reduced during starvation. Interacts with GTP-bound form of RagA/RRAGA or RagB/RRAGB and GDP-bound form of RagC/RRAGC or RagD/RRAGD, promoting recruitment of mTORC1 to the lysosomes. Interacts (when phosphorylated by AMPK) with 14-3-3 protein, leading to inhibition of its activity. Interacts with SPAG5; SPAG5 competes with MTOR for RPTOR-binding, resulting in decreased mTORC1 formation. Interacts with WAC; WAC positively regulates MTOR activity by promoting the assembly of the TTT complex composed of TELO2, TTI1 and TTI2 and the RUVBL complex composed of RUVBL1 and RUVBL2 into the TTT-RUVBL complex which leads to the dimerization of the mTORC1 complex and its subsequent activation. Interacts with G3BP1. The complex formed with G3BP1 and SPAG5 is increased by oxidative stress. Interacts with HTR6. Interacts with PIH1D1. Interacts with LARP1. Interacts with BRAT1. Interacts with SIK3. Interacts with SLC38A7; this interaction mediates the recruitment of mTORC1 to the lysosome and its subsequent activation. Insulin-stimulated phosphorylation at Ser-863 by MTOR and MAPK8 regulates mTORC1 activity. Phosphorylated at Ser-863 by NLK in response to stress, disrupting the interaction with small GTPases Rag (RagA/RRAGA, RagB/RRAGB, RagC/RRAGC and/or RagD/RRAGD), thereby preventing lysosome recruitment and activation of the mTORC1 complex. Osmotic stress also induces phosphorylation at Ser-696, Thr-706 and Ser-863 by MAPK8. Ser-863 phosphorylation is required for phosphorylation at Ser-855 and Ser-859. In response to nutrient limitation, phosphorylated at Ser-722 and Ser-792 by AMPK; phosphorylation promotes interaction with 14-3-3 proteins, leading to negative regulation of the mTORC1 complex. Phosphorylation at Ser-722 and Ser-792 by AMPK in response to glucose starvation inhibits O-GlcNAcylation by OGT and subsequent activation of mTORC1. In response to growth factors, phosphorylated at Ser-719, Ser-721 and Ser-722 by RPS6KA1, which stimulates mTORC1 activity. Phosphorylation at Ser-791 by PKA downstream of cAMP inhibits the mTORC1 complex. Phosphorylated at Ser-877 by TBK1, leading to negative regulation of the mTORC1 complex. In terms of processing, O-GlcNAcylated by OGT upon glucose sufficiency, promoting interaction with small GTPases Rag (RagA/RRAGA, RagB/RRAGB, RagC/RRAGC and/or RagD/RRAGD) and subsequent recruitment of mTORC1 to lysosomal membranes, leading to activation of the mTORC1 complex. Phosphorylation at Ser-722 and Ser-792 by AMPK in response to glucose starvation inhibits O-GlcNAcylation. Post-translationally, acetylation at Lys-1097 by EP300/p300 in response to leucine metabolite acetyl-coA promotes its activity, leading to activation of the mTORC1 complex. Acetylation is decreased in response to fasting. Phosphorylated at Ser-877 by TBK1, leading to negative regulation of the mTORC1 complex. Ubiquitinated, leading to its degradation by the proteasome. Deubiquitinated by OTUB1 via a non-catalytic mechanism. Ubiquitinated by an E3 ubiquitin ligase complex containing VHL.

Its subcellular location is the cytoplasm. It localises to the lysosome. The protein localises to the cytoplasmic granule. Functionally, component of the mechanistic target of rapamycin complex 1 (mTORC1), an evolutionarily conserved central nutrient sensor that stimulates anabolic reactions and macromolecule biosynthesis to promote cellular biomass generation and growth. In response to nutrients, growth factors or amino acids, mTORC1 is recruited to the lysosome membrane and promotes protein, lipid and nucleotide synthesis by phosphorylating several substrates, such as ribosomal protein S6 kinase (RPS6KB1 and RPS6KB2) and EIF4EBP1 (4E-BP1). In the same time, it inhibits catabolic pathways by phosphorylating the autophagy initiation components ULK1 and ATG13, as well as transcription factor TFEB, a master regulators of lysosomal biogenesis and autophagy. The mTORC1 complex is inhibited in response to starvation and amino acid depletion. Within the mTORC1 complex, RPTOR acts both as a molecular adapter, which (1) mediates recruitment of mTORC1 to lysosomal membranes via interaction with small GTPases Rag (RagA/RRAGA, RagB/RRAGB, RagC/RRAGC and/or RagD/RRAGD), and a (2) substrate-specific adapter, which promotes substrate specificity by binding to TOS motif-containing proteins and direct them towards the active site of the MTOR kinase domain for phosphorylation. mTORC1 complex regulates many cellular processes, such as odontoblast and osteoclast differentiation or neuronal transmission. mTORC1 complex in excitatory neuronal transmission is required for the prosocial behavior induced by the psychoactive substance lysergic acid diethylamide (LSD). In Mus musculus (Mouse), this protein is Regulatory-associated protein of mTOR.